A 119-amino-acid polypeptide reads, in one-letter code: Large ribosomal subunit protein bL20 (119 aa).

Belongs to the bacterial ribosomal protein bL20 family.

Binds directly to 23S ribosomal RNA and is necessary for the in vitro assembly process of the 50S ribosomal subunit. It is not involved in the protein synthesizing functions of that subunit. In Clostridium novyi (strain NT), this protein is Large ribosomal subunit protein bL20.